The primary structure comprises 713 residues: Metal transporter CNNM3 (713 aa).

A helical transmembrane segment spans residues 7–29; it reads AVVGWLGWVLAAFCLGSTAGEAA. Asn73 is a glycosylation site (N-linked (GlcNAc...) asparagine). The 179-residue stretch at 136–314 folds into the CNNM transmembrane domain; sequence EAAPPWALGL…DPYSDLSKGV (179 aa). 4 consecutive transmembrane segments (helical) span residues 137-157, 199-219, 227-247, and 267-287; these read AAPP…AAVA, CALG…AVLL, AVPA…VLPA, and LAVL…ELAA. CBS domains are found at residues 324–385 and 392–458; these read LTPL…CTPL and YNHP…ILDE. The tract at residues 664–713 is disordered; sequence LPPSPENAELQAIPGSQTRLLGDKSRETAGSTNSRPSIPVEESPGRNPGV. Residues Ser667 and Ser706 each carry the phosphoserine modification.

It belongs to the ACDP family. As to expression, widely expressed with highest levels in brain, kidney, liver, lung and heart.

It localises to the cell membrane. Probable metal transporter. The protein is Metal transporter CNNM3 (Cnnm3) of Mus musculus (Mouse).